Reading from the N-terminus, the 103-residue chain is Large ribosomal subunit protein uL22c (103 aa).

The protein belongs to the universal ribosomal protein uL22 family. In terms of assembly, part of the 50S ribosomal subunit.

Its subcellular location is the plastid. The protein resides in the chloroplast. Functionally, this protein binds specifically to 23S rRNA. The globular domain of the protein is located near the polypeptide exit tunnel on the outside of the subunit, while an extended beta-hairpin is found that lines the wall of the exit tunnel in the center of the 70S ribosome. The protein is Large ribosomal subunit protein uL22c (rpl22) of Cyanidium caldarium (Red alga).